We begin with the raw amino-acid sequence, 2188 residues long: Phenolphthiocerol/phthiocerol polyketide synthase subunit C (2188 aa).

In terms of domain architecture, Ketosynthase family 3 (KS3) spans 34 to 462; it reads SEPIAVIGMG…GTNAHVVIEQ (429 aa). Active-site for beta-ketoacyl synthase activity residues include Cys210, His345, and His384. Residues 572–890 form an acyltransferase region; that stretch reads VFVYSGRGSQ…NLNTTHTTHP (319 aa). Ser660 acts as the For malonyltransferase activity in catalysis. The segment at 928–1050 is N-terminal hotdog fold; sequence HPLLGVGVTD…ATVARAEPLA (123 aa). The interval 928–1093 is dehydratase; sequence HPLLGVGVTD…QQHGPAFQGI (166 aa). Positions 928–1223 constitute a PKS/mFAS DH domain; the sequence is HPLLGVGVTD…MAVLGSGSGA (296 aa). His959 acts as the Proton acceptor; for dehydratase activity in catalysis. The interval 1067–1223 is C-terminal hotdog fold; sequence EDQLDPDDLY…MAVLGSGSGA (157 aa). Asp1129 functions as the Proton donor; for dehydratase activity in the catalytic mechanism. An enoylreductase region spans residues 1467–1778; sequence GRLDALNVHE…SGKHTGKIVI (312 aa). The beta-ketoacyl reductase stretch occupies residues 1802–1981; that stretch reads GGYLIVGGMG…GINWGPWADV (180 aa). 1803–1848 contributes to the NADP(+) binding site; sequence GYLIVGGMGGLGFVVARWLAEQGAGLIVLNGRSAPSDEVAAAIAEL. The Carrier domain maps to 2069–2145; that stretch reads ERPGHLASAI…DLATALCERM (77 aa). Residue Ser2105 is modified to O-(pantetheine 4'-phosphoryl)serine.

In terms of assembly, homodimer. NADP(+) serves as cofactor. The cofactor is pantetheine 4'-phosphate.

The catalysed reaction is icosanoyl-[(phenol)carboxyphthiodiolenone synthase] + 2 (S)-methylmalonyl-CoA + 3 malonyl-CoA + 5 NADPH + 10 H(+) = C32-carboxyphthiodiolenone-[(phenol)carboxyphthiodiolenone synthase] + 5 CO2 + 5 NADP(+) + 5 CoA + 2 H2O. The enzyme catalyses docosanoyl-[(phenol)carboxyphthiodiolenone synthase] + 2 (S)-methylmalonyl-CoA + 3 malonyl-CoA + 5 NADPH + 10 H(+) = C34-carboxyphthiodiolenone-[(phenol)carboxyphthiodiolenone synthase] + 5 CO2 + 5 NADP(+) + 5 CoA + 2 H2O. It catalyses the reaction 17-(4-hydroxyphenyl)heptadecanoyl-[(phenol)carboxyphthiodiolenone synthase] + 2 (S)-methylmalonyl-CoA + 3 malonyl-CoA + 5 NADPH + 10 H(+) = C35-(phenol)carboxyphthiodiolenone-[(phenol)carboxyphthiodiolenone synthase] + 5 CO2 + 5 NADP(+) + 5 CoA + 2 H2O. It carries out the reaction 19-(4-hydroxyphenyl)nonadecanoyl-[(phenol)carboxyphthiodiolenone synthase] + 2 (S)-methylmalonyl-CoA + 3 malonyl-CoA + 5 NADPH + 10 H(+) = C37-(phenol)carboxyphthiodiolenone-[(phenol)carboxyphthiodiolenone synthase] + 5 CO2 + 5 NADP(+) + 5 CoA + 2 H2O. It participates in lipid metabolism; fatty acid biosynthesis. Functionally, part of the PpsABCDE complex involved in the biosynthesis of the lipid core common to phthiocerols and phenolphthiocerols by successive additions of malonyl-CoA or methylmalonyl-CoA extender units. PpsA can accept as substrate the activated forms of either icosanoyl (C20), docosanoyl (C22) or lignoceroyl (C24) groups from FadD26, or a (4-hydroxyphenyl)-C17 or (4-hydroxyphenyl)-C19 fatty acyl from FadD29. PpsA initiates the biosynthesis and extends its substrate using a malonyl-CoA extender unit. The PpsB and PpsC proteins add the second and third malonyl-CoA extender units. PpsD adds an (R)-methylmalonyl unit and PpsE adds a second (R)-methylmalonyl unit. The incorporation of the methylmalonyl units results in formation of two branched methyl groups in the elongated product. The polypeptide is Phenolphthiocerol/phthiocerol polyketide synthase subunit C (ppsC) (Mycobacterium bovis (strain ATCC BAA-935 / AF2122/97)).